Reading from the N-terminus, the 353-residue chain is Photosystem II D2 protein (353 aa).

T2 is subject to N-acetylthreonine. T2 is modified (phosphothreonine). A helical transmembrane segment spans residues 41 to 61 (CAYFALGGWFTGTTFVTSWYT). H118 is a binding site for chlorophyll a. The helical transmembrane segment at 125-141 (GFMLRQFELARSVQLRP) threads the bilayer. 2 residues coordinate pheophytin a: Q130 and N143. The helical transmembrane segment at 153-166 (VFVSVFLIYPLGQS) threads the bilayer. Residue H198 coordinates chlorophyll a. A helical transmembrane segment spans residues 208 to 228 (AALLCAIHGATVENTLFEDGD). A plastoquinone contacts are provided by H215 and F262. A Fe cation-binding site is contributed by H215. Fe cation is bound at residue H269. Residues 279-295 (GLWMSALGVVGLALNLR) traverse the membrane as a helical segment.

Belongs to the reaction center PufL/M/PsbA/D family. In terms of assembly, PSII is composed of 1 copy each of membrane proteins PsbA, PsbB, PsbC, PsbD, PsbE, PsbF, PsbH, PsbI, PsbJ, PsbK, PsbL, PsbM, PsbT, PsbX, PsbY, PsbZ, Psb30/Ycf12, at least 3 peripheral proteins of the oxygen-evolving complex and a large number of cofactors. It forms dimeric complexes. It depends on The D1/D2 heterodimer binds P680, chlorophylls that are the primary electron donor of PSII, and subsequent electron acceptors. It shares a non-heme iron and each subunit binds pheophytin, quinone, additional chlorophylls, carotenoids and lipids. There is also a Cl(-1) ion associated with D1 and D2, which is required for oxygen evolution. The PSII complex binds additional chlorophylls, carotenoids and specific lipids. as a cofactor.

The protein localises to the plastid. It localises to the chloroplast thylakoid membrane. It carries out the reaction 2 a plastoquinone + 4 hnu + 2 H2O = 2 a plastoquinol + O2. Its function is as follows. Photosystem II (PSII) is a light-driven water:plastoquinone oxidoreductase that uses light energy to abstract electrons from H(2)O, generating O(2) and a proton gradient subsequently used for ATP formation. It consists of a core antenna complex that captures photons, and an electron transfer chain that converts photonic excitation into a charge separation. The D1/D2 (PsbA/PsbD) reaction center heterodimer binds P680, the primary electron donor of PSII as well as several subsequent electron acceptors. D2 is needed for assembly of a stable PSII complex. In Lemna minor (Common duckweed), this protein is Photosystem II D2 protein.